Consider the following 232-residue polypeptide: MGQKVHPNGIRLGIVKPWNATWFANTKDFADNLDGDFKVRQFLTSELKKASLSRIVIERPAKSIRVTIHTARPGVVIGKKGEDVEKLRAAVAKIAGVPAQINIAEVRKPELDAQLVGDSIASQLERRVMFRRAMKRAVQNAMRLGAKGIKVEVSGRLGGAEIARSEWYREGRVPLHTLRADIDYATSSAHTQYGVIGIKTWIFKGEILGGMPAANAVEPKGDKPKKQRKGRK.

Residues 39–107 (VRQFLTSELK…PAQINIAEVR (69 aa)) enclose the KH type-2 domain. Positions 213–232 (AANAVEPKGDKPKKQRKGRK) are disordered.

This sequence belongs to the universal ribosomal protein uS3 family. Part of the 30S ribosomal subunit. Forms a tight complex with proteins S10 and S14.

Its function is as follows. Binds the lower part of the 30S subunit head. Binds mRNA in the 70S ribosome, positioning it for translation. In Vibrio parahaemolyticus serotype O3:K6 (strain RIMD 2210633), this protein is Small ribosomal subunit protein uS3.